A 161-amino-acid polypeptide reads, in one-letter code: 2-C-methyl-D-erythritol 2,4-cyclodiphosphate synthase (161 aa).

2 residues coordinate a divalent metal cation: D11 and H13. 4-CDP-2-C-methyl-D-erythritol 2-phosphate-binding positions include 11–13 (DIH) and 37–38 (HS). H45 is a binding site for a divalent metal cation. Residues 59–61 (DIG), 135–138 (TTNE), and R145 contribute to the 4-CDP-2-C-methyl-D-erythritol 2-phosphate site.

The protein belongs to the IspF family. Homotrimer. A divalent metal cation serves as cofactor.

It catalyses the reaction 4-CDP-2-C-methyl-D-erythritol 2-phosphate = 2-C-methyl-D-erythritol 2,4-cyclic diphosphate + CMP. It functions in the pathway isoprenoid biosynthesis; isopentenyl diphosphate biosynthesis via DXP pathway; isopentenyl diphosphate from 1-deoxy-D-xylulose 5-phosphate: step 4/6. Its function is as follows. Involved in the biosynthesis of isopentenyl diphosphate (IPP) and dimethylallyl diphosphate (DMAPP), two major building blocks of isoprenoid compounds. Catalyzes the conversion of 4-diphosphocytidyl-2-C-methyl-D-erythritol 2-phosphate (CDP-ME2P) to 2-C-methyl-D-erythritol 2,4-cyclodiphosphate (ME-CPP) with a corresponding release of cytidine 5-monophosphate (CMP). This is 2-C-methyl-D-erythritol 2,4-cyclodiphosphate synthase from Synechocystis sp. (strain ATCC 27184 / PCC 6803 / Kazusa).